The following is a 510-amino-acid chain: Amidophosphoribosyltransferase (510 aa).

Cys2 (nucleophile) is an active-site residue. The region spanning 2 to 239 is the Glutamine amidotransferase type-2 domain; it reads CGILGIALAD…PGEAVIIPKD (238 aa). Positions 373 and 374 each coordinate Mg(2+).

In the C-terminal section; belongs to the purine/pyrimidine phosphoribosyltransferase family. Mg(2+) serves as cofactor.

It catalyses the reaction 5-phospho-beta-D-ribosylamine + L-glutamate + diphosphate = 5-phospho-alpha-D-ribose 1-diphosphate + L-glutamine + H2O. The protein operates within purine metabolism; IMP biosynthesis via de novo pathway; N(1)-(5-phospho-D-ribosyl)glycinamide from 5-phospho-alpha-D-ribose 1-diphosphate: step 1/2. This Lachancea kluyveri (Yeast) protein is Amidophosphoribosyltransferase (ADE4).